A 71-amino-acid chain; its full sequence is Protein MMP24OS (71 aa).

A compositionally biased stretch (gly residues) spans 1-10 (MGAQLSGGRG). The interval 1-61 (MGAQLSGGRG…PSPWGPLDDV (61 aa)) is disordered. Over residues 36 to 55 (HPPQPQPQPQPQPQPEPSPW) the composition is skewed to pro residues.

The chain is Protein MMP24OS from Homo sapiens (Human).